Consider the following 320-residue polypeptide: 4-hydroxy-3-methylbut-2-enyl diphosphate reductase (320 aa).

[4Fe-4S] cluster is bound at residue C13. Positions 41 and 75 each coordinate (2E)-4-hydroxy-3-methylbut-2-enyl diphosphate. H41 and H75 together coordinate dimethylallyl diphosphate. Isopentenyl diphosphate is bound by residues H41 and H75. C97 is a binding site for [4Fe-4S] cluster. H125 serves as a coordination point for (2E)-4-hydroxy-3-methylbut-2-enyl diphosphate. H125 is a binding site for dimethylallyl diphosphate. H125 provides a ligand contact to isopentenyl diphosphate. E127 (proton donor) is an active-site residue. Residue T168 participates in (2E)-4-hydroxy-3-methylbut-2-enyl diphosphate binding. C225 contributes to the [4Fe-4S] cluster binding site. (2E)-4-hydroxy-3-methylbut-2-enyl diphosphate is bound by residues S253, S254, N255, and S302. Dimethylallyl diphosphate is bound by residues S253, S254, N255, and S302. S253, S254, N255, and S302 together coordinate isopentenyl diphosphate.

This sequence belongs to the IspH family. [4Fe-4S] cluster is required as a cofactor.

The catalysed reaction is isopentenyl diphosphate + 2 oxidized [2Fe-2S]-[ferredoxin] + H2O = (2E)-4-hydroxy-3-methylbut-2-enyl diphosphate + 2 reduced [2Fe-2S]-[ferredoxin] + 2 H(+). The enzyme catalyses dimethylallyl diphosphate + 2 oxidized [2Fe-2S]-[ferredoxin] + H2O = (2E)-4-hydroxy-3-methylbut-2-enyl diphosphate + 2 reduced [2Fe-2S]-[ferredoxin] + 2 H(+). The protein operates within isoprenoid biosynthesis; dimethylallyl diphosphate biosynthesis; dimethylallyl diphosphate from (2E)-4-hydroxy-3-methylbutenyl diphosphate: step 1/1. It functions in the pathway isoprenoid biosynthesis; isopentenyl diphosphate biosynthesis via DXP pathway; isopentenyl diphosphate from 1-deoxy-D-xylulose 5-phosphate: step 6/6. Its function is as follows. Catalyzes the conversion of 1-hydroxy-2-methyl-2-(E)-butenyl 4-diphosphate (HMBPP) into a mixture of isopentenyl diphosphate (IPP) and dimethylallyl diphosphate (DMAPP). Acts in the terminal step of the DOXP/MEP pathway for isoprenoid precursor biosynthesis. The sequence is that of 4-hydroxy-3-methylbut-2-enyl diphosphate reductase from Chlorobium luteolum (strain DSM 273 / BCRC 81028 / 2530) (Pelodictyon luteolum).